A 460-amino-acid polypeptide reads, in one-letter code: Bifunctional protein GlmU (460 aa).

A pyrophosphorylase region spans residues M1–R230. Residues L9–G12, K23, Q73, and G78–T79 each bind UDP-N-acetyl-alpha-D-glucosamine. D103 lines the Mg(2+) pocket. The UDP-N-acetyl-alpha-D-glucosamine site is built by G140, E155, N170, and N228. Residue N228 participates in Mg(2+) binding. Residues V231–N251 are linker. An N-acetyltransferase region spans residues G252 to K460. UDP-N-acetyl-alpha-D-glucosamine contacts are provided by R333 and K351. Catalysis depends on H363, which acts as the Proton acceptor. UDP-N-acetyl-alpha-D-glucosamine is bound by residues Y366 and N377. Acetyl-CoA-binding positions include A380, N386 to Y387, S405, A423, and R440.

This sequence in the N-terminal section; belongs to the N-acetylglucosamine-1-phosphate uridyltransferase family. The protein in the C-terminal section; belongs to the transferase hexapeptide repeat family. As to quaternary structure, homotrimer. The cofactor is Mg(2+).

The protein resides in the cytoplasm. The enzyme catalyses alpha-D-glucosamine 1-phosphate + acetyl-CoA = N-acetyl-alpha-D-glucosamine 1-phosphate + CoA + H(+). It carries out the reaction N-acetyl-alpha-D-glucosamine 1-phosphate + UTP + H(+) = UDP-N-acetyl-alpha-D-glucosamine + diphosphate. It participates in nucleotide-sugar biosynthesis; UDP-N-acetyl-alpha-D-glucosamine biosynthesis; N-acetyl-alpha-D-glucosamine 1-phosphate from alpha-D-glucosamine 6-phosphate (route II): step 2/2. Its pathway is nucleotide-sugar biosynthesis; UDP-N-acetyl-alpha-D-glucosamine biosynthesis; UDP-N-acetyl-alpha-D-glucosamine from N-acetyl-alpha-D-glucosamine 1-phosphate: step 1/1. The protein operates within bacterial outer membrane biogenesis; LPS lipid A biosynthesis. Its function is as follows. Catalyzes the last two sequential reactions in the de novo biosynthetic pathway for UDP-N-acetylglucosamine (UDP-GlcNAc). The C-terminal domain catalyzes the transfer of acetyl group from acetyl coenzyme A to glucosamine-1-phosphate (GlcN-1-P) to produce N-acetylglucosamine-1-phosphate (GlcNAc-1-P), which is converted into UDP-GlcNAc by the transfer of uridine 5-monophosphate (from uridine 5-triphosphate), a reaction catalyzed by the N-terminal domain. The polypeptide is Bifunctional protein GlmU (Streptococcus suis (strain 98HAH33)).